The primary structure comprises 273 residues: Phosphate import ATP-binding protein PstB 1 (273 aa).

Residues 27-268 (ISIEHLSLYY…PLKKQTEDYI (242 aa)) enclose the ABC transporter domain. 59 to 66 (GPSGCGKS) provides a ligand contact to ATP.

It belongs to the ABC transporter superfamily. Phosphate importer (TC 3.A.1.7) family. The complex is composed of two ATP-binding proteins (PstB), two transmembrane proteins (PstC and PstA) and a solute-binding protein (PstS).

Its subcellular location is the cell inner membrane. The catalysed reaction is phosphate(out) + ATP + H2O = ADP + 2 phosphate(in) + H(+). In terms of biological role, part of the ABC transporter complex PstSACB involved in phosphate import. Responsible for energy coupling to the transport system. This is Phosphate import ATP-binding protein PstB 1 from Vibrio cholerae serotype O1 (strain ATCC 39315 / El Tor Inaba N16961).